We begin with the raw amino-acid sequence, 131 residues long: Cilia- and flagella-associated protein 144 (131 aa).

Residues 79–99 (TKKYSEPQTESQEIGWNTTPL) are disordered. The span at 84–99 (EPQTESQEIGWNTTPL) shows a compositional bias: polar residues.

Belongs to the CFAP144 family. As to expression, expressed in choroid plexus (at protein level). Expressed by motile ciliated cells in choroid plexus.

The protein localises to the cytoplasm. It localises to the cytoskeleton. It is found in the cilium axoneme. The protein resides in the flagellum axoneme. In terms of biological role, microtubule inner protein (MIP) part of the dynein-decorated doublet microtubules (DMTs) in cilia axoneme, which is required for motile cilia beating. The sequence is that of Cilia- and flagella-associated protein 144 (CFAP144) from Gallus gallus (Chicken).